Consider the following 372-residue polypeptide: DNA/RNA-binding protein ALBA4 (372 aa).

Belongs to the histone-like Alba family. In terms of assembly, identified in a TARE6-associated complex consisting of over 30 proteins and including ALBA1, ALBA2 and ALBA4; the complex binds to the non-coding subtelomeric repeat region TARE6.

The protein localises to the nucleus. Its subcellular location is the chromosome. It is found in the telomere. The protein resides in the cytoplasm. Its function is as follows. Possesses DNA- and RNA-binding activities. Binds to DNA fragments longer than 14 base pairs with relaxed sequence specificity. Associates with the subtelomeric TARE6 repeats. Regulates the abundance of transcript sub-populations in a stage-specific manner. Regulates activation of male gametocytes. Participates in the coordination of sporozoite development in the oocyst. This Plasmodium falciparum (isolate 3D7) protein is DNA/RNA-binding protein ALBA4.